The chain runs to 358 residues: tRNA-specific 2-thiouridylase MnmA (358 aa).

Residues 22-29 (LVSGGIDS) and Phe-48 contribute to the ATP site. Cys-105 functions as the Nucleophile in the catalytic mechanism. An intrachain disulfide couples Cys-105 to Cys-201. Gly-129 lines the ATP pocket. The interaction with tRNA stretch occupies residues 151-153 (KEQ). Residue Cys-201 is the Cysteine persulfide intermediate of the active site. The segment at 306-307 (RY) is interaction with tRNA.

The protein belongs to the MnmA/TRMU family.

It is found in the cytoplasm. The enzyme catalyses S-sulfanyl-L-cysteinyl-[protein] + uridine(34) in tRNA + AH2 + ATP = 2-thiouridine(34) in tRNA + L-cysteinyl-[protein] + A + AMP + diphosphate + H(+). Catalyzes the 2-thiolation of uridine at the wobble position (U34) of tRNA, leading to the formation of s(2)U34. The polypeptide is tRNA-specific 2-thiouridylase MnmA (Desulfosudis oleivorans (strain DSM 6200 / JCM 39069 / Hxd3) (Desulfococcus oleovorans)).